The sequence spans 140 residues: Holo-[acyl-carrier-protein] synthase (140 aa).

Residues Asp8 and Glu57 each coordinate Mg(2+).

The protein belongs to the P-Pant transferase superfamily. AcpS family. Mg(2+) is required as a cofactor.

Its subcellular location is the cytoplasm. The enzyme catalyses apo-[ACP] + CoA = holo-[ACP] + adenosine 3',5'-bisphosphate + H(+). In terms of biological role, transfers the 4'-phosphopantetheine moiety from coenzyme A to a Ser of acyl-carrier-protein. The protein is Holo-[acyl-carrier-protein] synthase of Beijerinckia indica subsp. indica (strain ATCC 9039 / DSM 1715 / NCIMB 8712).